A 109-amino-acid chain; its full sequence is Large ribosomal subunit protein uL22 (109 aa).

The protein belongs to the universal ribosomal protein uL22 family. As to quaternary structure, part of the 50S ribosomal subunit.

Its function is as follows. This protein binds specifically to 23S rRNA; its binding is stimulated by other ribosomal proteins, e.g. L4, L17, and L20. It is important during the early stages of 50S assembly. It makes multiple contacts with different domains of the 23S rRNA in the assembled 50S subunit and ribosome. In terms of biological role, the globular domain of the protein is located near the polypeptide exit tunnel on the outside of the subunit, while an extended beta-hairpin is found that lines the wall of the exit tunnel in the center of the 70S ribosome. This is Large ribosomal subunit protein uL22 from Ralstonia pickettii (strain 12J).